Here is a 446-residue protein sequence, read N- to C-terminus: tRNA modification GTPase MnmE (446 aa).

The (6S)-5-formyl-5,6,7,8-tetrahydrofolate site is built by Arg24, Glu81, and Lys120. The region spanning Gly216–Leu368 is the TrmE-type G domain. K(+) is bound at residue Asn226. Residues Asn226 to Ser231, Thr245 to Thr251, and Asp270 to Gly273 each bind GTP. Ser230 contacts Mg(2+). Residues Thr245, Val247, and Thr250 each contribute to the K(+) site. Position 251 (Thr251) interacts with Mg(2+). Lys446 serves as a coordination point for (6S)-5-formyl-5,6,7,8-tetrahydrofolate.

Belongs to the TRAFAC class TrmE-Era-EngA-EngB-Septin-like GTPase superfamily. TrmE GTPase family. As to quaternary structure, homodimer. Heterotetramer of two MnmE and two MnmG subunits. It depends on K(+) as a cofactor.

Its subcellular location is the cytoplasm. In terms of biological role, exhibits a very high intrinsic GTPase hydrolysis rate. Involved in the addition of a carboxymethylaminomethyl (cmnm) group at the wobble position (U34) of certain tRNAs, forming tRNA-cmnm(5)s(2)U34. The polypeptide is tRNA modification GTPase MnmE (Xanthomonas campestris pv. campestris (strain B100)).